Here is a 220-residue protein sequence, read N- to C-terminus: Octanoyltransferase (220 aa).

The BPL/LPL catalytic domain maps to 36–212; it reads ADSPDQFWLV…CLARQLGRRL (177 aa). Substrate contacts are provided by residues 75–82, 142–144, and 155–157; these read RGGQVTYH, SLG, and GVA. Cys-173 acts as the Acyl-thioester intermediate in catalysis.

Belongs to the LipB family.

It is found in the cytoplasm. It catalyses the reaction octanoyl-[ACP] + L-lysyl-[protein] = N(6)-octanoyl-L-lysyl-[protein] + holo-[ACP] + H(+). Its pathway is protein modification; protein lipoylation via endogenous pathway; protein N(6)-(lipoyl)lysine from octanoyl-[acyl-carrier-protein]: step 1/2. Its function is as follows. Catalyzes the transfer of endogenously produced octanoic acid from octanoyl-acyl-carrier-protein onto the lipoyl domains of lipoate-dependent enzymes. Lipoyl-ACP can also act as a substrate although octanoyl-ACP is likely to be the physiological substrate. The protein is Octanoyltransferase of Chromohalobacter salexigens (strain ATCC BAA-138 / DSM 3043 / CIP 106854 / NCIMB 13768 / 1H11).